We begin with the raw amino-acid sequence, 969 residues long: Levansucrase (969 aa).

An N-terminal signal peptide occupies residues Met-1–Ala-52. Over residues Ser-89 to Thr-103 the composition is skewed to low complexity. The disordered stretch occupies residues Ser-89–Thr-169. Residues Val-106–Pro-116 show a composition bias toward polar residues. Over residues Ser-124–Ala-166 the composition is skewed to low complexity. Residues Trp-286, Asp-287, and Ser-356 each coordinate sucrose. Asp-287 serves as the catalytic Nucleophile. Ca(2+) is bound at residue Asp-443. Positions 448 and 449 each coordinate sucrose. Ca(2+)-binding residues include Gln-473, Asn-512, and Asp-544. Residue Glu-545 coordinates sucrose. Glu-547 serves as the catalytic Proton donor/acceptor. Arg-565 contacts sucrose. Disordered regions lie at residues Val-746–Arg-843 and Ile-860–Ser-934. Residues Lys-747 to Glu-758 show a composition bias toward basic and acidic residues. Residues Lys-776–Ser-789 are compositionally biased toward polar residues. Residues Val-872–Ser-910 show a composition bias toward basic and acidic residues. The span at Thr-924–Ser-934 shows a compositional bias: polar residues. A helical transmembrane segment spans residues Ile-938–Gly-958.

It belongs to the glycosyl hydrolase 68 family.

Its subcellular location is the cell membrane. It is found in the cell surface. It catalyses the reaction [6)-beta-D-fructofuranosyl-(2-&gt;](n) alpha-D-glucopyranoside + sucrose = [6)-beta-D-fructofuranosyl-(2-&gt;](n+1) alpha-D-glucopyranoside + D-glucose. Ca(2+) may play an important structural role and promote stability of levansucrase. Functionally, catalyzes the synthesis of levan, a fructose polymer, by transferring the fructosyl moiety from sucrose to a growing acceptor molecule. Also displays sucrose hydrolase activity. The protein is Levansucrase of Streptococcus salivarius.